The sequence spans 1150 residues: Solute carrier family 12 member 6 (1150 aa).

Over 1 to 135 (MHPPETTTKM…DEYFDKNLAL (135 aa)) the chain is Cytoplasmic. Positions 20 to 66 (TKIDDIPGLSDTSPDLSSRSSSRVRFSSRESVPETSRSEPMSEMSGA) are disordered. Positions 28–45 (LSDTSPDLSSRSSSRVRF) are enriched in low complexity. 2 positions are modified to phosphoserine: Ser32 and Ser120. Residues 136 to 158 (FEEEMDTRPKVSSLLNRMANYTN) traverse the membrane as a discontinuously helical segment. Residues Ser147 and Ser148 each contribute to the K(+) site. Position 148 is a phosphoserine (Ser148). Asn151 is a binding site for chloride. The Extracellular segment spans residues 159–165 (LTQGAKE). The interval 161–181 (QGAKEHEEAENITEGKKKPTK) is disordered. Positions 163–177 (AKEHEEAENITEGKK) are enriched in basic and acidic residues. A helical transmembrane segment spans residues 166–188 (HEEAENITEGKKKPTKTPQMGTF). Over 189-211 (MGVYLPCLQNIFGVILFLRLTWV) the chain is Cytoplasmic. A helical transmembrane segment spans residues 212 to 245 (VGTAGVLQAFAIVLICCCCTMLTAISMSAIATNG). At 246–263 (VVPAGGSYFMISRALGPE) the chain is on the extracellular side. The next 2 helical transmembrane spans lie at 264–287 (FGGA…ILGA) and 288–316 (IEIF…AMLN). Topologically, residues 317–433 (NMRVYGTAFL…FVHNNVTSIQ (117 aa)) are extracellular. A disulfide bond links Cys375 and Cys390. Asn379, Asn398, Asn411, and Asn428 each carry an N-linked (GlcNAc...) asparagine glycan. Cysteines 410 and 420 form a disulfide. The helical transmembrane segment at 434–454 (GIPGLASGIITENLWSNYLPK) threads the bilayer. Residues Ile443, Thr444, and Asn446 each contribute to the K(+) site. Chloride contacts are provided by Ile443 and Thr444. 2 residues coordinate chloride: Leu447 and Trp448. Residues 455-464 (GEIIEKPSAK) lie on the Cytoplasmic side of the membrane. The helical transmembrane segment at 465-487 (SSDVLGSLNHEYVLVDITTSFTL) threads the bilayer. Over 488–518 (LVGIFFPSVTGIMAGSNRSGDLKDAQKSIPI) the chain is Extracellular. The chain crosses the membrane as a helical span at residues 519-545 (GTILAILTTSFVYLSNVVLFGACIEGV). Residues 546-568 (VLRDKFGDAVKGNLVVGTLSWPS) lie on the Cytoplasmic side of the membrane. 2 consecutive transmembrane segments (helical) span residues 569-589 (PWVI…QSLT) and 590-612 (GAPR…VFGH). Ile603 serves as a coordination point for chloride. Residues 613–629 (SKANGEPTWALLLTAAI) are Cytoplasmic-facing. 2 helical membrane passes run 630-649 (AELG…LSMF) and 650-665 (FLMC…ALQT). At 666 to 1150 (LLRTPNWRPR…GGSEVITIYS (485 aa)) the chain is on the cytoplasmic side. A scissor helix region spans residues 682 to 691 (ALSFMGMSIC). Ser736 carries the phosphoserine modification. Thr778 is modified (phosphothreonine). The residue at position 981 (Ser981) is a Phosphoserine. Thr991 is subject to Phosphothreonine; by OXSR1 and STK39. Residues Ser1023, Ser1029, and Ser1032 each carry the phosphoserine modification. Thr1048 carries the phosphothreonine; by OXSR1 and STK39 modification. Position 1121 is a phosphotyrosine (Tyr1121). The interaction with CKB stretch occupies residues 1133–1150 (ERVLLVRGGGSEVITIYS).

The protein belongs to the SLC12A transporter family. K/Cl co-transporter subfamily. Homodimer; adopts a domain-swap conformation at the scissor helices connecting the transmembrane domain and C-terminal domain. Heterodimer with K-Cl cotransporter SLC12A5. Interacts (via C-terminus) with CKB; the interaction may be required for potassium-chloride cotransport activity. Phosphorylated, phosphorylation regulates transporter activity. Phosphorylated at Thr-991 and Thr-1048 by OXSR1/OSR1 and STK39/SPAK downstream of WNK kinases (WNK1, WNK2, WNK3 or WNK4), inhibiting the potassium-chloride cotransport activity. In terms of processing, N-glycosylated. Expressed in brain (at protein level). Highly expressed in heart, brain and kidney. Detected at lower levels in skeletal muscle, placenta, lung and pancreas. Detected in umbilical vein endothelial cells. As to expression, more abundant in kidney. In terms of tissue distribution, testis specific.

It is found in the cell membrane. The protein localises to the basolateral cell membrane. It carries out the reaction K(+)(in) + chloride(in) = K(+)(out) + chloride(out). Its activity is regulated as follows. Inhibited following phosphorylation by OXSR1/OSR1 and STK39/SPAK: phosphorylation takes place downstream of WNK kinases (WNK1, WNK2, WNK3 or WNK4) in response to hyperosmotic stress and subsequent cell shrinkage. Activated by N-ethylmaleimide (NEM). Inhibited by DIOA, bumetanide and furosemide. Its function is as follows. Mediates electroneutral potassium-chloride cotransport when activated by cell swelling. May contribute to cell volume homeostasis in single cells. Mediates electroneutral potassium-chloride cotransport when activated by cell swelling. May contribute to cell volume homeostasis in single cells. In terms of biological role, mediates electroneutral potassium-chloride cotransport when activated by cell swelling. May contribute to cell volume homeostasis in single cells. The protein is Solute carrier family 12 member 6 of Homo sapiens (Human).